The primary structure comprises 137 residues: Small ribosomal subunit protein uS12 (137 aa).

Residues 1–57 (MPTINQLVRKPRKSKVEKSKSPALNVGYNSHKKVQTNVSSPQKRGVATRVGTMTPKK) form a disordered region. At Asp-102 the chain carries 3-methylthioaspartic acid.

The protein belongs to the universal ribosomal protein uS12 family. As to quaternary structure, part of the 30S ribosomal subunit. Contacts proteins S8 and S17. May interact with IF1 in the 30S initiation complex.

Functionally, with S4 and S5 plays an important role in translational accuracy. Interacts with and stabilizes bases of the 16S rRNA that are involved in tRNA selection in the A site and with the mRNA backbone. Located at the interface of the 30S and 50S subunits, it traverses the body of the 30S subunit contacting proteins on the other side and probably holding the rRNA structure together. The combined cluster of proteins S8, S12 and S17 appears to hold together the shoulder and platform of the 30S subunit. The chain is Small ribosomal subunit protein uS12 from Streptococcus pneumoniae serotype 2 (strain D39 / NCTC 7466).